Consider the following 90-residue polypeptide: uncharacterized protein (90 aa).

Lys-88 is covalently cross-linked (Isoglutamyl lysine isopeptide (Lys-Gln) (interchain with Q-Cter in protein Pup)).

This is an uncharacterized protein from Mycolicibacterium smegmatis (strain ATCC 700084 / mc(2)155) (Mycobacterium smegmatis).